Here is a 163-residue protein sequence, read N- to C-terminus: Transcription elongation factor GreA (163 aa).

Residues Asn-45–Leu-65 are a coiled coil.

The protein belongs to the GreA/GreB family.

In terms of biological role, necessary for efficient RNA polymerase transcription elongation past template-encoded arresting sites. The arresting sites in DNA have the property of trapping a certain fraction of elongating RNA polymerases that pass through, resulting in locked ternary complexes. Cleavage of the nascent transcript by cleavage factors such as GreA or GreB allows the resumption of elongation from the new 3'terminus. GreA releases sequences of 2 to 3 nucleotides. This Helicobacter hepaticus (strain ATCC 51449 / 3B1) protein is Transcription elongation factor GreA.